The sequence spans 93 residues: NADH-ubiquinone oxidoreductase chain 4L (93 aa).

The next 3 helical transmembrane spans lie at Ala2 to Leu22, Ile27 to Val47, and Ile62 to Tyr82.

The protein belongs to the complex I subunit 4L family.

It localises to the mitochondrion inner membrane. The enzyme catalyses a ubiquinone + NADH + 5 H(+)(in) = a ubiquinol + NAD(+) + 4 H(+)(out). Its function is as follows. Core subunit of the mitochondrial membrane respiratory chain NADH dehydrogenase (Complex I) that is believed to belong to the minimal assembly required for catalysis. Complex I functions in the transfer of electrons from NADH to the respiratory chain. The immediate electron acceptor for the enzyme is believed to be ubiquinone. This is NADH-ubiquinone oxidoreductase chain 4L (ND4L) from Mycosarcoma maydis (Corn smut fungus).